Consider the following 174-residue polypeptide: Cell division protein FtsL (174 aa).

Over 1–38 (MLAAPRELSYIPQPVVSSKQSPRSGLSNRRRESRARQK) the chain is Cytoplasmic. Residues 39–59 (ILLLGLVLMGFVIGLSLTFLT) form a helical membrane-spanning segment. Topologically, residues 60 to 174 (MQVLIKGYKI…EPARQAGAGV (115 aa)) are extracellular.

It belongs to the FtsL family.

It localises to the cell membrane. Its function is as follows. Essential cell division protein. This Moorella thermoacetica (strain ATCC 39073 / JCM 9320) protein is Cell division protein FtsL.